A 1175-amino-acid chain; its full sequence is MSEDKSGSFYSMYKLCGQLEKESSHSGKTQLIKSFCNVFKGDLYLLAKLMLCKEDKRVFRIKDKAMLKICSHIWDCDLDDMIEDLDNGDFTETCKKFYIEYGKYPEKSTLTLKEVDQVLDSLTVSGKFEDQVKIINKLLKRCTPFDFRLVCRIIDSDLKINTGAKFFLDAFHPQAYDAFKKANNLKGVIEKIQQHDFDNDNGDGDDGDGDDNDDDDGDGDSDSDKKKKKSSGGSGSDSGSKKKSKSFEVAIKLMTPIKPMLPKAVKTVEGVVKSSECFYAEIKYDGERIQIHKDGNQFSCYSRNLKPLMPWKVDEVKPYIPKSTKAQQMILDGEILLMDTKTSQPLPFGTLSAHKKNGFKDATVCVFLFDILYLNGKSLIHLPLKERREILEKNVMVVKNRIEFSEVTIVNGASEKSKLTALLNRVFKEKLEGLVIKDAMSEYEPGCRHWIKIKKDYIHGMADSADLIAVGGYYGSGSMGGLVTVFLMVCYDKQNKIYKTVVKASGGLDDNMIAKLQPKVTSTMTKISKEVSKIPYWLDCPKQYAPDFIVKDIKQAMIFEIESAEFTKSDHHTTGYSMRFPRILKIRHDKDYKTATTLEELVEIGKDIKIVPVGKGDNNSPTTTTTTTTTTTTTTSSKLIKKQQLSDDDDDNDKDSKQQQQEPSKLKFVSDDLLDPFNDKSDDESNKIFILNYVDNSGIWNEKGLSGAIGKKWPSIPKSFSQGDSNIIKSGEIRVEKVKDDSISTNKKVFICNLSCIIPPKSKKESYTFSLKEFKSAIKEAKGAINQKKASVHLAKPQFTSPSWSELDEVLTKELYNSGIKVFVHSISKSSPTTTSPTTTSPTTTSPKITSPSSSSSPSNKLSPLKRGRDEKLEHEIIKDIEPSLPIFEDVNAVIDSKTIDQVDVKRLINSIKTMGGRVSDKWQQVGIGKTTHLICNGMSDLYLHVDRLGGTIVLPNWVDQCFGSDKLLPLHEDYIYFNKKDHPDYSQSSSSSSMSIEEEKIVVTTTSDDPSEGNQQQQDKKVIKESKIIQSKDHSSTTTIDTKITITSTNNNNNGNDNNKTRKKQHLLSIFQECIIFLHDNVNDRETLKRYIIAYGGDISDSVNDKTTHLVASLPNNFSNVKPKDLFKSIINNNSKNNNNNNNNNNNGIIVNSLWLWDSINMSDLLDVKNYKLF.

The segment at 195 to 243 (HDFDNDNGDGDDGDGDDNDDDDGDGDSDSDKKKKKSSGGSGSDSGSKKK) is disordered. Residues 199–221 (NDNGDGDDGDGDDNDDDDGDGDS) are compositionally biased toward acidic residues. Glutamate 281 is a binding site for ATP. Lysine 283 functions as the N6-AMP-lysine intermediate in the catalytic mechanism. 2 residues coordinate ATP: arginine 288 and arginine 303. Residues glutamate 334 and glutamate 432 each contribute to the Mg(2+) site. ATP-binding residues include lysine 437, arginine 448, and lysine 452. Disordered stretches follow at residues 612 to 669 (PVGK…LKFV) and 829 to 869 (KSSP…KRGR). Low complexity-rich tracts occupy residues 622-635 (TTTT…TTTT) and 829-859 (KSSP…SSPS). Positions 883 to 976 (PSLPIFEDVN…KLLPLHEDYI (94 aa)) constitute a BRCT 1 domain. The tract at residues 984–1036 (PDYSQSSSSSSMSIEEEKIVVTTTSDDPSEGNQQQQDKKVIKESKIIQSKDHS) is disordered. A compositionally biased stretch (low complexity) spans 987 to 996 (SQSSSSSSMS). Polar residues predominate over residues 1004–1018 (VTTTSDDPSEGNQQQ). The span at 1019–1036 (QDKKVIKESKIIQSKDHS) shows a compositional bias: basic and acidic residues. The BRCT 2 domain maps to 1067-1174 (HLLSIFQECI…DLLDVKNYKL (108 aa)).

The protein belongs to the ATP-dependent DNA ligase family. Requires Mg(2+) as cofactor.

Its subcellular location is the nucleus. The enzyme catalyses ATP + (deoxyribonucleotide)n-3'-hydroxyl + 5'-phospho-(deoxyribonucleotide)m = (deoxyribonucleotide)n+m + AMP + diphosphate.. Functionally, the alpha isoform interacts with DNA-repair protein XRCC1 and can correct defective DNA strand-break repair and sister chromatid exchange following treatment with ionizing radiation and alkylating agents. The beta isoform does not interact with XRCC1 and may be specifically involved in the completion of homologous recombination events that occur during meiotic prophase. This is DNA ligase 3 (lig3) from Dictyostelium discoideum (Social amoeba).